The sequence spans 235 residues: Clathrin light chain A (235 aa).

A disordered region spans residues 1 to 32; that stretch reads MAELDPFGAPAGAPGGPALGNGVAGAGEEDPA. Over residues 13-25 the composition is skewed to gly residues; sequence APGGPALGNGVAG. The involved in binding clathrin heavy chain stretch occupies residues 99–161; it reads VDRLQSEPES…QLQKTKANNR (63 aa). Residues serine 104 and serine 193 each carry the phosphoserine modification. Lysine 210 carries the post-translational modification N6-acetyllysine. Serine 223 is subject to Phosphoserine. Lysine 229 carries the N6-acetyllysine modification.

This sequence belongs to the clathrin light chain family. Clathrin coats are formed from molecules containing 3 heavy chains and 3 light chains. Interacts with CALY; the interaction stimulates clathrin self-assembly and clathrin-mediated endocytosis. Interacts with CKAP5 and TACC3 forming the TACC3/ch-TOG/clathrin complex located at spindle inter-microtubules bridges; the complex implicates clathrin triskelions.

Its subcellular location is the cytoplasmic vesicle membrane. The protein localises to the membrane. The protein resides in the coated pit. It localises to the cytoplasm. It is found in the cytoskeleton. Its subcellular location is the spindle. Its function is as follows. Clathrin is the major protein of the polyhedral coat of coated pits and vesicles. Acts as a component of the TACC3/ch-TOG/clathrin complex proposed to contribute to stabilization of kinetochore fibers of the mitotic spindle by acting as inter-microtubule bridge. The polypeptide is Clathrin light chain A (Clta) (Mus musculus (Mouse)).